A 379-amino-acid polypeptide reads, in one-letter code: Trans-prenyltransferase abpB (379 aa).

Residues 90–91 (RL), R112, K197, R264, K266, Y268, and Y338 each bind substrate.

This sequence belongs to the tryptophan dimethylallyltransferase family.

The catalysed reaction is aspulvinone E + 2 dimethylallyl diphosphate = aspulvinone H + 2 diphosphate. The enzyme catalyses butyrolactone II + dimethylallyl diphosphate = butyrolactone I + diphosphate. It participates in secondary metabolite biosynthesis. Trans-prenyltransferase that acts in both the aspulvinones and butyrolactones pathways. Prenylates aspulvinone E and butyrolactone II to yield repectively aspulvinone H and butyrolactone I. The chain is Trans-prenyltransferase abpB from Aspergillus terreus (strain NIH 2624 / FGSC A1156).